Reading from the N-terminus, the 342-residue chain is Deoxyguanosinetriphosphate triphosphohydrolase-like protein (342 aa).

The HD domain occupies 75–190 (RLVHTLEVSQ…VRFADKIAYV (116 aa)).

Belongs to the dGTPase family. Type 2 subfamily.

This Clostridium perfringens (strain 13 / Type A) protein is Deoxyguanosinetriphosphate triphosphohydrolase-like protein.